We begin with the raw amino-acid sequence, 289 residues long: Nitrogenase iron protein (289 aa).

8–15 serves as a coordination point for ATP; it reads GKGGIGKS. C96 lines the [4Fe-4S] cluster pocket. ADP-ribosylarginine; by dinitrogenase reductase ADP-ribosyltransferase is present on R99. C130 provides a ligand contact to [4Fe-4S] cluster.

This sequence belongs to the NifH/BchL/ChlL family. Homodimer. [4Fe-4S] cluster serves as cofactor. Post-translationally, the reversible ADP-ribosylation of Arg-99 inactivates the nitrogenase reductase and regulates nitrogenase activity.

The enzyme catalyses N2 + 8 reduced [2Fe-2S]-[ferredoxin] + 16 ATP + 16 H2O = H2 + 8 oxidized [2Fe-2S]-[ferredoxin] + 2 NH4(+) + 16 ADP + 16 phosphate + 6 H(+). Its function is as follows. The key enzymatic reactions in nitrogen fixation are catalyzed by the nitrogenase complex, which has 2 components: the iron protein and the molybdenum-iron protein. The sequence is that of Nitrogenase iron protein from Parafrankia sp. (strain EAN1pec).